A 109-amino-acid polypeptide reads, in one-letter code: MFKGGMGNIMKQAQQMQERMQKVQDDLANLEVTGEAGAGMVKVTMTCNHNVRRVNIDESLMDDDKDMVEDLVAAAFNDAVRRVQETSKEKMGDVTGGMPLPPGFKMPGF.

The tract at residues 86–109 (TSKEKMGDVTGGMPLPPGFKMPGF) is disordered. Pro residues predominate over residues 99–109 (PLPPGFKMPGF).

It belongs to the YbaB/EbfC family. Homodimer.

It is found in the cytoplasm. The protein localises to the nucleoid. Its function is as follows. Binds to DNA and alters its conformation. May be involved in regulation of gene expression, nucleoid organization and DNA protection. The protein is Nucleoid-associated protein MADE_1013280 of Alteromonas mediterranea (strain DSM 17117 / CIP 110805 / LMG 28347 / Deep ecotype).